Reading from the N-terminus, the 420-residue chain is UDP-N-acetylglucosamine 1-carboxyvinyltransferase (420 aa).

22 to 23 contacts phosphoenolpyruvate; it reads KN. R93 lines the UDP-N-acetyl-alpha-D-glucosamine pocket. C117 serves as the catalytic Proton donor. C117 is modified (2-(S-cysteinyl)pyruvic acid O-phosphothioketal). UDP-N-acetyl-alpha-D-glucosamine is bound by residues 122–126, D307, and V329; that span reads RPVDL.

The protein belongs to the EPSP synthase family. MurA subfamily.

It localises to the cytoplasm. It carries out the reaction phosphoenolpyruvate + UDP-N-acetyl-alpha-D-glucosamine = UDP-N-acetyl-3-O-(1-carboxyvinyl)-alpha-D-glucosamine + phosphate. It functions in the pathway cell wall biogenesis; peptidoglycan biosynthesis. In terms of biological role, cell wall formation. Adds enolpyruvyl to UDP-N-acetylglucosamine. The protein is UDP-N-acetylglucosamine 1-carboxyvinyltransferase of Hahella chejuensis (strain KCTC 2396).